Here is a 351-residue protein sequence, read N- to C-terminus: Amylovoran biosynthesis glycosyltransferase AmsD (351 aa).

The protein belongs to the glycosyltransferase group 1 family. Glycosyltransferase 4 subfamily.

It participates in glycan metabolism; exopolysaccharide biosynthesis. In terms of biological role, involved in the biosynthesis of amylovoran which functions as a virulence factor. May be involved in the formation of galactose alpha-1,6 linkages in amylovoran. This is Amylovoran biosynthesis glycosyltransferase AmsD (amsD) from Erwinia amylovora (Fire blight bacteria).